The sequence spans 219 residues: Elongation factor Ts, chloroplastic (219 aa).

It belongs to the EF-Ts family.

It is found in the plastid. The protein localises to the chloroplast. Its function is as follows. Associates with the EF-Tu.GDP complex and induces the exchange of GDP to GTP. It remains bound to the aminoacyl-tRNA.EF-Tu.GTP complex up to the GTP hydrolysis stage on the ribosome. This Rhodomonas salina (Cryptomonas salina) protein is Elongation factor Ts, chloroplastic (tsf).